We begin with the raw amino-acid sequence, 192 residues long: Xanthine phosphoribosyltransferase (192 aa).

Residues L20 and N27 each coordinate xanthine. 128 to 132 (ANGDA) provides a ligand contact to 5-phospho-alpha-D-ribose 1-diphosphate. K156 contacts xanthine.

The protein belongs to the purine/pyrimidine phosphoribosyltransferase family. Xpt subfamily. Homodimer.

It is found in the cytoplasm. It carries out the reaction XMP + diphosphate = xanthine + 5-phospho-alpha-D-ribose 1-diphosphate. The protein operates within purine metabolism; XMP biosynthesis via salvage pathway; XMP from xanthine: step 1/1. In terms of biological role, converts the preformed base xanthine, a product of nucleic acid breakdown, to xanthosine 5'-monophosphate (XMP), so it can be reused for RNA or DNA synthesis. This Staphylococcus carnosus (strain TM300) protein is Xanthine phosphoribosyltransferase.